The chain runs to 144 residues: Transcriptional regulator MraZ (144 aa).

2 SpoVT-AbrB domains span residues 6-48 (TYTP…PTDV) and 77-120 (ADEG…DPVR).

It belongs to the MraZ family. As to quaternary structure, forms oligomers.

It is found in the cytoplasm. The protein resides in the nucleoid. In Nocardioides sp. (strain ATCC BAA-499 / JS614), this protein is Transcriptional regulator MraZ.